Here is a 294-residue protein sequence, read N- to C-terminus: N-acetylmuramic acid 6-phosphate etherase (294 aa).

In terms of domain architecture, SIS spans 54-217; that stretch reads VIQSFEEEGR…STASMIGVGK (164 aa). Residue E82 is the Proton donor of the active site. Residue E113 is part of the active site.

It belongs to the GCKR-like family. MurNAc-6-P etherase subfamily. Homodimer.

It carries out the reaction N-acetyl-D-muramate 6-phosphate + H2O = N-acetyl-D-glucosamine 6-phosphate + (R)-lactate. It functions in the pathway amino-sugar metabolism; N-acetylmuramate degradation. Functionally, specifically catalyzes the cleavage of the D-lactyl ether substituent of MurNAc 6-phosphate, producing GlcNAc 6-phosphate and D-lactate. In Bacillus anthracis (strain A0248), this protein is N-acetylmuramic acid 6-phosphate etherase.